Reading from the N-terminus, the 344-residue chain is Phenylalanine--tRNA ligase alpha subunit (344 aa).

Residue Glu-255 participates in Mg(2+) binding.

Belongs to the class-II aminoacyl-tRNA synthetase family. Phe-tRNA synthetase alpha subunit type 1 subfamily. Tetramer of two alpha and two beta subunits. Mg(2+) is required as a cofactor.

The protein resides in the cytoplasm. The catalysed reaction is tRNA(Phe) + L-phenylalanine + ATP = L-phenylalanyl-tRNA(Phe) + AMP + diphosphate + H(+). The polypeptide is Phenylalanine--tRNA ligase alpha subunit (Cytophaga hutchinsonii (strain ATCC 33406 / DSM 1761 / CIP 103989 / NBRC 15051 / NCIMB 9469 / D465)).